We begin with the raw amino-acid sequence, 800 residues long: MFKLFAALRKERLWDFTGGIHPPEMKQISSEIPLRRIPLPNLLIIPLQQHLGPEGELLVKVGERVLKGQPLTRGNGRTLPVHASTSGTISAISRQVTAHPSGLPELCISLVPDQQDCWGERHPLPDYRAMTPPALIDHIHQAGIAGLGGAGFPTAAKLNGGADRINTLIINAAECEPYITADDRLMREHAAEIVSGCAILSHILAPERVLIGIEDNKPQAIAALRHALQCHEKIQLRVIPTKYPSGGAKQLIKILTGMEVPHGRHSASIGVLMQNVATVYAIKRAVIDGEPLIERVVTLTGEQMHRPGNVWAAIGTPVKHLLQNGGLIAQNKHPMVIMGGPLMGFTLSRLGVPVVKITNCILTPSRDEFSVPQAEQPCIRCGACADVCPARLLPQQLYWFSQGKEHDKARGYHLQECIECGACAYVCPSNIPLVQYYRQEKAEIRALDDEARRAAEAKARFEARLARLEREKAAREQRHKQAAVSVSNSDRETIQAALQRINLRKAGQTDDVAAVNDPRQAALAAAIARAKAKQAGATPAPAATDSDAAAPAPQDDPRKAAIAAAITRAKAKQAGATPAPAATNSDAVAPAPQDDPRKAAIARAKAKQAGATPAPAATNSDAVAPAPQDDPRKAAIAAAIARAKAKAKQAGATPAPATTDSDAADPAPQDDPRKAAIAAAIARAKAKQAASGHATTEPVTVQENTDGARRQIHRATLQAAYASGAGADLTAAAEGATPESDRQAAIATAIARVKARQTLVNGEVPKPVATSTPTDTQKAAVAAAIARIKAKQASAAPSEE.

4Fe-4S ferredoxin-type domains lie at 367-398 and 408-437; these read DEFS…QQLY and KARG…VQYY. Positions 378, 381, 384, 388, 417, 420, 423, and 427 each coordinate [4Fe-4S] cluster. Composition is skewed to low complexity over residues 536 to 553, 571 to 583, 599 to 617, 647 to 667, and 675 to 690; these read GATP…APAP, AKQA…PAAT, AAIA…APAA, AKQA…ADPA, and AAIA…KQAA. 3 disordered regions span residues 536–558, 571–631, and 647–706; these read GATP…DDPR, AKQA…QDDP, and AKQA…ENTD. Positions 693–705 are enriched in polar residues; sequence HATTEPVTVQENT.

The protein belongs to the 4Fe4S bacterial-type ferredoxin family. RnfC subfamily. As to quaternary structure, the complex is composed of six subunits: RnfA, RnfB, RnfC, RnfD, RnfE and RnfG. [4Fe-4S] cluster is required as a cofactor.

The protein resides in the cell inner membrane. In terms of biological role, part of a membrane-bound complex that couples electron transfer with translocation of ions across the membrane. This is Ion-translocating oxidoreductase complex subunit C from Edwardsiella ictaluri (strain 93-146).